We begin with the raw amino-acid sequence, 286 residues long: tRNA dimethylallyltransferase (286 aa).

The interval 18-21 (DSMQ) is interaction with substrate tRNA.

The protein belongs to the IPP transferase family. As to quaternary structure, monomer. Mg(2+) serves as cofactor.

The catalysed reaction is adenosine(37) in tRNA + dimethylallyl diphosphate = N(6)-dimethylallyladenosine(37) in tRNA + diphosphate. In terms of biological role, catalyzes the transfer of a dimethylallyl group onto the adenine at position 37 in tRNAs that read codons beginning with uridine, leading to the formation of N6-(dimethylallyl)adenosine (i(6)A). This Tropheryma whipplei (strain TW08/27) (Whipple's bacillus) protein is tRNA dimethylallyltransferase.